Here is a 161-residue protein sequence, read N- to C-terminus: Ethylene-responsive transcription factor ERF070 (161 aa).

The interval Met1–Arg35 is disordered. The segment at residues Lys78–Gly140 is a DNA-binding region (AP2/ERF).

Belongs to the AP2/ERF transcription factor family. ERF subfamily.

Its subcellular location is the nucleus. In terms of biological role, probably acts as a transcriptional activator. Binds to the GCC-box pathogenesis-related promoter element. May be involved in the regulation of gene expression by stress factors and by components of stress signal transduction pathways. This is Ethylene-responsive transcription factor ERF070 (ERF070) from Arabidopsis thaliana (Mouse-ear cress).